Consider the following 187-residue polypeptide: MSVEPSLNRAPIMERFGDTIEDLGTAHGIDVFAVPPERIVEFCRFLKEHPAMQFNFLSDICGVDHYPETPRFEAVYHLYSLPNRWRVRIKCRLGDPPEVPSVTGVWRTANWHEREAWDMYGIRFAGHPDLRRIYMWEGFEGFPQRKDFPLRGYKDKLNPFGAEGPPPTQPDLATRDIPQGRPSTPES.

The disordered stretch occupies residues 153-187 (YKDKLNPFGAEGPPPTQPDLATRDIPQGRPSTPES).

Belongs to the complex I 30 kDa subunit family. NDH-1 is composed of 14 different subunits. Subunits NuoB, C, D, E, F, and G constitute the peripheral sector of the complex.

Its subcellular location is the cell inner membrane. The catalysed reaction is a quinone + NADH + 5 H(+)(in) = a quinol + NAD(+) + 4 H(+)(out). Its function is as follows. NDH-1 shuttles electrons from NADH, via FMN and iron-sulfur (Fe-S) centers, to quinones in the respiratory chain. The immediate electron acceptor for the enzyme in this species is believed to be ubiquinone. Couples the redox reaction to proton translocation (for every two electrons transferred, four hydrogen ions are translocated across the cytoplasmic membrane), and thus conserves the redox energy in a proton gradient. This is NADH-quinone oxidoreductase subunit C 2 from Rhizobium etli (strain CIAT 652).